The primary structure comprises 273 residues: Undecaprenyl-diphosphatase (273 aa).

7 consecutive transmembrane segments (helical) span residues 45 to 65 (AKTFEVVIQLGSILAVVVMFW), 90 to 110 (LTLIHILLGMVPAVVLGLIFH), 116 to 136 (LFNPINVMYALVVGGVLLIAA), 154 to 173 (YRQAFMIGCFQCLALWPGFS), 190 to 210 (YAASEFSFLLAVPMMMGATAL), 222 to 242 (ADFPMFAVGFVTAFLVALVAI), and 252 to 272 (ISFIPFAIYRFIVAAAVYVVF).

Belongs to the UppP family.

It localises to the cell inner membrane. The catalysed reaction is di-trans,octa-cis-undecaprenyl diphosphate + H2O = di-trans,octa-cis-undecaprenyl phosphate + phosphate + H(+). Catalyzes the dephosphorylation of undecaprenyl diphosphate (UPP). Confers resistance to bacitracin. The chain is Undecaprenyl-diphosphatase from Enterobacter sp. (strain 638).